The chain runs to 349 residues: Core protein VP7 (349 aa).

Residues asparagine 148 and asparagine 287 are each glycosylated (N-linked (GlcNAc...) asparagine; by host).

Belongs to the orbivirus VP7 family.

It is found in the virion. Functionally, the VP7 protein is one of the five proteins (with VP1, VP3, VP4, and VP6) which form the inner capsid of the virus. This chain is Core protein VP7 (Segment-7), found in Epizootic hemorrhagic disease virus 1 (EHDV-1).